Reading from the N-terminus, the 462-residue chain is Citrate synthase, mitochondrial (462 aa).

Residues 1 to 21 (MRSINQLLKQASLSQKSQYNF) constitute a mitochondrion transit peptide. Residues His300, His346, and Asp401 contribute to the active site.

This sequence belongs to the citrate synthase family. As to quaternary structure, homodimer.

The protein resides in the mitochondrion matrix. It is found in the cytoplasm. The protein localises to the cytoskeleton. It carries out the reaction oxaloacetate + acetyl-CoA + H2O = citrate + CoA + H(+). The protein operates within carbohydrate metabolism; tricarboxylic acid cycle; isocitrate from oxaloacetate: step 1/2. Structural protein involved in oral morphogenesis and in pronuclear behavior during conjugation. Respiratory enzyme. This Tetrahymena thermophila protein is Citrate synthase, mitochondrial.